Reading from the N-terminus, the 496-residue chain is Cobyric acid synthase (496 aa).

One can recognise a GATase cobBQ-type domain in the interval 250 to 437 (TLKVIAPALP…LHGLFESPQA (188 aa)). The active-site Nucleophile is Cys331. Residue His429 is part of the active site.

It belongs to the CobB/CobQ family. CobQ subfamily.

The protein operates within cofactor biosynthesis; adenosylcobalamin biosynthesis. Its function is as follows. Catalyzes amidations at positions B, D, E, and G on adenosylcobyrinic A,C-diamide. NH(2) groups are provided by glutamine, and one molecule of ATP is hydrogenolyzed for each amidation. In Hahella chejuensis (strain KCTC 2396), this protein is Cobyric acid synthase.